Here is a 294-residue protein sequence, read N- to C-terminus: Zinc finger protein 346 (294 aa).

The residue at position 1 (M1) is an N-acetylmethionine. Positions 1-19 (MECPAPDATDAADPGEAGP) are enriched in low complexity. The disordered stretch occupies residues 1 to 35 (MECPAPDATDAADPGEAGPYKGSEEPEGREPDGVR). Residues 22–35 (GSEEPEGREPDGVR) are compositionally biased toward basic and acidic residues. The Matrin-type 1 zinc-finger motif lies at 70–104 (FTSTQCKVCCAMLISESQKLAHYQSKKHANKVKRY). The Zn(2+) site is built by C75, C78, H91, and H97. K114 participates in a covalent cross-link: Glycyl lysine isopeptide (Lys-Gly) (interchain with G-Cter in SUMO2). A Matrin-type 2 zinc finger spans residues 131-165 (DKNHCCPICNMTFSSPAVAQSHYLGKTHAKSLKLK). 4 residues coordinate Zn(2+): C136, C139, H152, and H158. A Glycyl lysine isopeptide (Lys-Gly) (interchain with G-Cter in SUMO2) cross-link involves residue K170. 2 consecutive Matrin-type zinc fingers follow at residues 182-216 (DPDK…ETKL) and 236-270 (GKGY…SPKT). The segment at 269 to 294 (KTLVTLGSQTPVQTQPTPKDSSTVQD) is disordered.

In terms of assembly, forms a heteromeric complex with XPO5 and ILF3. Found in a nuclear export complex with XPO5, RAN, ILF3, ZNF346 and double-stranded RNA. Interacts with XPO5. Interacts with ILF3 in an RNA-independent manner. Expressed in all tissues tested, including heart, brain, spleen, lung, liver, muscle, kidney and testis. Exogenous expression induced apoptosis.

It localises to the nucleus. The protein resides in the nucleolus. The protein localises to the cytoplasm. Its function is as follows. Binds with low affinity to dsDNA and ssRNA, and with high affinity to dsRNA, with no detectable sequence specificity. May bind to specific miRNA hairpins. This chain is Zinc finger protein 346 (Znf346), found in Mus musculus (Mouse).